Consider the following 358-residue polypeptide: tRNA-specific 2-thiouridylase MnmA (358 aa).

ATP contacts are provided by residues 8–15 and M34; that span reads GLSGGVDS. Residues 94-96 form an interaction with target base in tRNA region; the sequence is NPD. Catalysis depends on C99, which acts as the Nucleophile. C99 and C196 are joined by a disulfide. G123 serves as a coordination point for ATP. The tract at residues 146 to 148 is interaction with tRNA; that stretch reads KDQ. C196 (cysteine persulfide intermediate) is an active-site residue. The interval 308 to 309 is interaction with tRNA; that stretch reads RY.

It belongs to the MnmA/TRMU family.

The protein localises to the cytoplasm. The catalysed reaction is S-sulfanyl-L-cysteinyl-[protein] + uridine(34) in tRNA + AH2 + ATP = 2-thiouridine(34) in tRNA + L-cysteinyl-[protein] + A + AMP + diphosphate + H(+). Its function is as follows. Catalyzes the 2-thiolation of uridine at the wobble position (U34) of tRNA, leading to the formation of s(2)U34. The protein is tRNA-specific 2-thiouridylase MnmA of Thiobacillus denitrificans (strain ATCC 25259 / T1).